Consider the following 200-residue polypeptide: BREX protein BrxA (200 aa).

This sequence belongs to the BrxA family.

BREX systems (bacteriophage exclusion) provide immunity against bacteriophage. Part of a type 1 BREX system. This system allows phage adsorption but prevents phage DNA replication, without degradation of the phage DNA. Methylation of bacterial DNA by PglX probably guides self/non-self discrimination. When the brxA-brxB-brxC-pglX and pglZ-brxL operons are transformed into a susceptible B.subtilis strain (BEST7003) they confer resistance to bacteriophages SPbeta, SP16, Zeta, phi3T and SP02 and partial protection to phages SP01 and SP82G (these include lytic and temperate phage). They do not protect against phages phi105, rho10 or rho14. Additionally confers a very slight reduction in efficiency of plasmid transformation. The sequence is that of BREX protein BrxA from Bacillus cereus (strain H3081.97).